Reading from the N-terminus, the 236-residue chain is 2-C-methyl-D-erythritol 4-phosphate cytidylyltransferase (236 aa).

It belongs to the IspD/TarI cytidylyltransferase family. IspD subfamily.

The enzyme catalyses 2-C-methyl-D-erythritol 4-phosphate + CTP + H(+) = 4-CDP-2-C-methyl-D-erythritol + diphosphate. It participates in isoprenoid biosynthesis; isopentenyl diphosphate biosynthesis via DXP pathway; isopentenyl diphosphate from 1-deoxy-D-xylulose 5-phosphate: step 2/6. Catalyzes the formation of 4-diphosphocytidyl-2-C-methyl-D-erythritol from CTP and 2-C-methyl-D-erythritol 4-phosphate (MEP). This is 2-C-methyl-D-erythritol 4-phosphate cytidylyltransferase from Burkholderia orbicola (strain AU 1054).